The following is a 394-amino-acid chain: RHOMBOID-like protein 4 (394 aa).

The disordered stretch occupies residues methionine 1–tyrosine 51. The span at glycine 39–serine 49 shows a compositional bias: polar residues. 7 consecutive transmembrane segments (helical) span residues tryptophan 64–methionine 84, tryptophan 147–isoleucine 167, phenylalanine 175–leucine 195, isoleucine 201–phenylalanine 221, valine 231–proline 251, aspartate 254–isoleucine 274, and isoleucine 300–leucine 320. Catalysis depends on serine 206, which acts as the Nucleophile. Catalysis depends on histidine 258, which acts as the Charge relay system.

The protein belongs to the peptidase S54 family.

The protein resides in the membrane. It carries out the reaction Cleaves type-1 transmembrane domains using a catalytic dyad composed of serine and histidine that are contributed by different transmembrane domains.. Functionally, probable rhomboid-type serine protease that catalyzes intramembrane proteolysis. The chain is RHOMBOID-like protein 4 from Arabidopsis thaliana (Mouse-ear cress).